Consider the following 739-residue polypeptide: Lysine decarboxylase (739 aa).

An N6-(pyridoxal phosphate)lysine modification is found at Lys-367. A compositionally biased stretch (basic and acidic residues) spans 714-726; sequence ADEPGDKPSDTVK. The interval 714 to 739 is disordered; the sequence is ADEPGDKPSDTVKKAPGKKPSAAKKS. Positions 728 to 739 are enriched in basic residues; sequence APGKKPSAAKKS.

It belongs to the Orn/Lys/Arg decarboxylase class-I family. Pyridoxal 5'-phosphate serves as cofactor.

Its subcellular location is the cytoplasm. It catalyses the reaction L-lysine + H(+) = cadaverine + CO2. The chain is Lysine decarboxylase from Hafnia alvei.